The following is a 379-amino-acid chain: Succinate--CoA ligase [ADP-forming] subunit beta (379 aa).

The region spanning 9 to 236 (KEIARKYGIE…GRDATPYEKV (228 aa)) is the ATP-grasp domain. Residues K46, 53-55 (GRG), E92, V95, and E100 each bind ATP. Residues N192 and D206 each coordinate Mg(2+). Substrate-binding positions include N256 and 313–315 (GIT).

This sequence belongs to the succinate/malate CoA ligase beta subunit family. As to quaternary structure, heterotetramer of two alpha and two beta subunits. Requires Mg(2+) as cofactor.

It catalyses the reaction succinate + ATP + CoA = succinyl-CoA + ADP + phosphate. The catalysed reaction is GTP + succinate + CoA = succinyl-CoA + GDP + phosphate. It participates in carbohydrate metabolism; tricarboxylic acid cycle; succinate from succinyl-CoA (ligase route): step 1/1. Functionally, succinyl-CoA synthetase functions in the citric acid cycle (TCA), coupling the hydrolysis of succinyl-CoA to the synthesis of either ATP or GTP and thus represents the only step of substrate-level phosphorylation in the TCA. The beta subunit provides nucleotide specificity of the enzyme and binds the substrate succinate, while the binding sites for coenzyme A and phosphate are found in the alpha subunit. This is Succinate--CoA ligase [ADP-forming] subunit beta from Desulfurococcus amylolyticus (strain DSM 18924 / JCM 16383 / VKM B-2413 / 1221n) (Desulfurococcus kamchatkensis).